The sequence spans 349 residues: 4-hydroxy-3-methylbut-2-en-1-yl diphosphate synthase (flavodoxin) (349 aa).

[4Fe-4S] cluster is bound by residues C264, C267, C299, and E306.

It belongs to the IspG family. It depends on [4Fe-4S] cluster as a cofactor.

The catalysed reaction is (2E)-4-hydroxy-3-methylbut-2-enyl diphosphate + oxidized [flavodoxin] + H2O + 2 H(+) = 2-C-methyl-D-erythritol 2,4-cyclic diphosphate + reduced [flavodoxin]. Its pathway is isoprenoid biosynthesis; isopentenyl diphosphate biosynthesis via DXP pathway; isopentenyl diphosphate from 1-deoxy-D-xylulose 5-phosphate: step 5/6. In terms of biological role, converts 2C-methyl-D-erythritol 2,4-cyclodiphosphate (ME-2,4cPP) into 1-hydroxy-2-methyl-2-(E)-butenyl 4-diphosphate. In Clostridium perfringens (strain 13 / Type A), this protein is 4-hydroxy-3-methylbut-2-en-1-yl diphosphate synthase (flavodoxin).